The primary structure comprises 203 residues: ATP-dependent Clp protease proteolytic subunit (203 aa).

Ser-107 functions as the Nucleophile in the catalytic mechanism. Residue His-132 is part of the active site.

It belongs to the peptidase S14 family. In terms of assembly, fourteen ClpP subunits assemble into 2 heptameric rings which stack back to back to give a disk-like structure with a central cavity, resembling the structure of eukaryotic proteasomes.

Its subcellular location is the cytoplasm. It catalyses the reaction Hydrolysis of proteins to small peptides in the presence of ATP and magnesium. alpha-casein is the usual test substrate. In the absence of ATP, only oligopeptides shorter than five residues are hydrolyzed (such as succinyl-Leu-Tyr-|-NHMec, and Leu-Tyr-Leu-|-Tyr-Trp, in which cleavage of the -Tyr-|-Leu- and -Tyr-|-Trp bonds also occurs).. Its function is as follows. Cleaves peptides in various proteins in a process that requires ATP hydrolysis. Has a chymotrypsin-like activity. Plays a major role in the degradation of misfolded proteins. The sequence is that of ATP-dependent Clp protease proteolytic subunit from Pelagibacter ubique (strain HTCC1062).